Consider the following 81-residue polypeptide: Photosystem I iron-sulfur center (81 aa).

2 consecutive 4Fe-4S ferredoxin-type domains span residues 2-31 (AHTV…MVPW) and 39-68 (IASA…IRVY). Cys-11, Cys-14, Cys-17, Cys-21, Cys-48, Cys-51, Cys-54, and Cys-58 together coordinate [4Fe-4S] cluster.

As to quaternary structure, the eukaryotic PSI reaction center is composed of at least 11 subunits. The cofactor is [4Fe-4S] cluster.

Its subcellular location is the plastid. The protein localises to the cyanelle thylakoid membrane. It catalyses the reaction reduced [plastocyanin] + hnu + oxidized [2Fe-2S]-[ferredoxin] = oxidized [plastocyanin] + reduced [2Fe-2S]-[ferredoxin]. Functionally, apoprotein for the two 4Fe-4S centers FA and FB of photosystem I (PSI); essential for photochemical activity. FB is the terminal electron acceptor of PSI, donating electrons to ferredoxin. The C-terminus interacts with PsaA/B/D and helps assemble the protein into the PSI complex. Required for binding of PsaD and PsaE to PSI. PSI is a cytochrome c6-ferredoxin oxidoreductase, converting photonic excitation into a charge separation, which transfers an electron from the donor P700 chlorophyll pair to the spectroscopically characterized acceptors A0, A1, FX, FA and FB in turn. The polypeptide is Photosystem I iron-sulfur center (Cyanophora paradoxa).